An 865-amino-acid polypeptide reads, in one-letter code: Alanine--tRNA ligase (865 aa).

His554, His558, Cys656, and His660 together coordinate Zn(2+).

The protein belongs to the class-II aminoacyl-tRNA synthetase family. It depends on Zn(2+) as a cofactor.

Its subcellular location is the cytoplasm. The catalysed reaction is tRNA(Ala) + L-alanine + ATP = L-alanyl-tRNA(Ala) + AMP + diphosphate. Catalyzes the attachment of alanine to tRNA(Ala) in a two-step reaction: alanine is first activated by ATP to form Ala-AMP and then transferred to the acceptor end of tRNA(Ala). Also edits incorrectly charged Ser-tRNA(Ala) and Gly-tRNA(Ala) via its editing domain. The protein is Alanine--tRNA ligase of Francisella tularensis subsp. tularensis (strain FSC 198).